Consider the following 341-residue polypeptide: Putative ubiquitin-like-specific protease 1B (341 aa).

Catalysis depends on residues histidine 231, aspartate 248, and cysteine 300.

This sequence belongs to the peptidase C48 family.

Functionally, protease that catalyzes two essential functions in the SUMO pathway: processing of full-length SUMOs to their mature forms and deconjugation of SUMO from targeted proteins. This chain is Putative ubiquitin-like-specific protease 1B (ULP1B), found in Arabidopsis thaliana (Mouse-ear cress).